Here is a 212-residue protein sequence, read N- to C-terminus: ATP phosphoribosyltransferase (212 aa).

Belongs to the ATP phosphoribosyltransferase family. Short subfamily. As to quaternary structure, heteromultimer composed of HisG and HisZ subunits.

It localises to the cytoplasm. It carries out the reaction 1-(5-phospho-beta-D-ribosyl)-ATP + diphosphate = 5-phospho-alpha-D-ribose 1-diphosphate + ATP. It functions in the pathway amino-acid biosynthesis; L-histidine biosynthesis; L-histidine from 5-phospho-alpha-D-ribose 1-diphosphate: step 1/9. In terms of biological role, catalyzes the condensation of ATP and 5-phosphoribose 1-diphosphate to form N'-(5'-phosphoribosyl)-ATP (PR-ATP). Has a crucial role in the pathway because the rate of histidine biosynthesis seems to be controlled primarily by regulation of HisG enzymatic activity. The protein is ATP phosphoribosyltransferase of Clostridium botulinum (strain ATCC 19397 / Type A).